The primary structure comprises 181 residues: Large ribosomal subunit protein uL5c (181 aa).

This sequence belongs to the universal ribosomal protein uL5 family. In terms of assembly, part of the 50S ribosomal subunit; contacts the 5S rRNA.

The protein resides in the plastid. Its subcellular location is the chloroplast. Functionally, binds 5S rRNA, forms part of the central protuberance of the 50S subunit. This is Large ribosomal subunit protein uL5c (rpl5) from Guillardia theta (Cryptophyte).